The chain runs to 467 residues: 3-isopropylmalate dehydratase large subunit (467 aa).

[4Fe-4S] cluster contacts are provided by cysteine 348, cysteine 408, and cysteine 411. Residues 417–445 (DQLTPGERSASTSNRNFEGRQGKGGRTHL) form a disordered region.

This sequence belongs to the aconitase/IPM isomerase family. LeuC type 1 subfamily. In terms of assembly, heterodimer of LeuC and LeuD. It depends on [4Fe-4S] cluster as a cofactor.

It catalyses the reaction (2R,3S)-3-isopropylmalate = (2S)-2-isopropylmalate. Its pathway is amino-acid biosynthesis; L-leucine biosynthesis; L-leucine from 3-methyl-2-oxobutanoate: step 2/4. Its function is as follows. Catalyzes the isomerization between 2-isopropylmalate and 3-isopropylmalate, via the formation of 2-isopropylmaleate. This chain is 3-isopropylmalate dehydratase large subunit, found in Saccharopolyspora erythraea (strain ATCC 11635 / DSM 40517 / JCM 4748 / NBRC 13426 / NCIMB 8594 / NRRL 2338).